The primary structure comprises 221 residues: NEDD8 ultimate buster 1 (221 aa).

UBA domains follow at residues 1 to 19 (LGLRACDGNVDHAAVHIAN), 30 to 76 (EERE…LLHN), and 95 to 135 (SPSQ…LVHN). The segment at 136-193 (GGRLPPDLQLSAEDSSSTPSTSPSDSAGTSSASTDEDMETEAVNEILEDIPEHEEDYL) is disordered. Residues 146–168 (SAEDSSSTPSTSPSDSAGTSSAS) show a composition bias toward low complexity. The span at 169–193 (TDEDMETEAVNEILEDIPEHEEDYL) shows a compositional bias: acidic residues.

Directly interacts with NEDD8 and PSMD4/S5a, a member of the regulatory subunit of the 26S proteasome. Interacts with AIPL1.

It is found in the nucleus. Functionally, specific down-regulator of the NEDD8 conjugation system. Recruits NEDD8 and its conjugates to the proteasome for degradation. The protein is NEDD8 ultimate buster 1 (NUB1) of Bos taurus (Bovine).